A 473-amino-acid chain; its full sequence is H(+)/Cl(-) exchange transporter ClcA (473 aa).

Residues methionine 1–proline 32 are Cytoplasmic-facing. The helical transmembrane segment at leucine 33–valine 69 threads the bilayer. Residues glutamine 70–phenylalanine 76 are Periplasmic-facing. A helical membrane pass occupies residues leucine 77–phenylalanine 100. Residues glycine 106–proline 110 carry the Selectivity filter part_1 motif. Chloride is bound at residue serine 107. The helical intramembrane region spans isoleucine 109–leucine 116. At glutamate 117–arginine 123 the chain is on the cytoplasmic side. A run of 2 helical transmembrane segments spans residues tryptophan 124–alanine 141 and glutamate 148–phenylalanine 166. The short motif at glycine 146–proline 150 is the Selectivity filter part_2 element. Over arginine 167–threonine 176 the chain is Cytoplasmic. The segment at residues leucine 177–alanine 189 is an intramembrane region (helical). The note=Loop between two helices intramembrane region spans phenylalanine 190–alanine 192. An intramembrane region (helical) is located at residues proline 193–isoleucine 201. Over glutamate 202–serine 214 the chain is Cytoplasmic. The chain crosses the membrane as a helical span at residues isoleucine 215–phenylalanine 232. At asparagine 233–leucine 252 the chain is on the periplasmic side. Residues tryptophan 253–glutamine 281 traverse the membrane as a helical segment. Residues arginine 282–glutamate 287 are Cytoplasmic-facing. Residues isoleucine 288–isoleucine 308 traverse the membrane as a helical segment. Over glutamate 309–serine 329 the chain is Periplasmic. The helical transmembrane segment at valine 330 to serine 349 threads the bilayer. The Cytoplasmic portion of the chain corresponds to serine 350–glycine 354. The short motif at glycine 355 to proline 359 is the Selectivity filter part_3 element. Residues glycine 355 to leucine 378 form a helical membrane-spanning segment. Residues isoleucine 356 and phenylalanine 357 each coordinate chloride. The Periplasmic segment spans residues phenylalanine 379 to alanine 386. Positions glycine 387–serine 401 form an intramembrane region, helical. The segment at residues valine 402–alanine 404 is an intramembrane region (note=Loop between two helices). The segment at residues proline 405–threonine 416 is an intramembrane region (helical). Positions aspartate 417–leucine 421 form an intramembrane region, note=Loop between two helices. Residues isoleucine 422–phenylalanine 438 traverse the membrane as a helical segment. Residues leucine 439–threonine 473 lie on the Cytoplasmic side of the membrane. Tyrosine 445 contacts chloride.

It belongs to the chloride channel (TC 2.A.49) family. ClcA subfamily. In terms of assembly, homodimer.

Its subcellular location is the cell inner membrane. It carries out the reaction 2 chloride(in) + H(+)(out) = 2 chloride(out) + H(+)(in). Proton-coupled chloride transporter. Functions as antiport system and exchanges two chloride ions for 1 proton. Probably acts as an electrical shunt for an outwardly-directed proton pump that is linked to amino acid decarboxylation, as part of the extreme acid resistance (XAR) response. This is H(+)/Cl(-) exchange transporter ClcA (clcA) from Salmonella typhimurium (strain LT2 / SGSC1412 / ATCC 700720).